A 683-amino-acid polypeptide reads, in one-letter code: Transforming growth factor-beta-induced protein ig-h3 (683 aa).

An N-terminal signal peptide occupies residues 1-23; it reads MALLMRLLTLALALSVGPAGTLA. Position 37 is a phosphoserine (serine 37). The 55-residue stretch at 45–99 folds into the EMI domain; that stretch reads GPNVCAVQKVIGTNKKYFTNCKQWYQRKICGKSTVISYECCPGYEKVPGEKGCPA. 5 disulfide bridges follow: cysteine 49–cysteine 85, cysteine 74–cysteine 339, cysteine 84–cysteine 97, cysteine 214–cysteine 317, and cysteine 473–cysteine 478. Cysteine 65 bears the S-cysteinyl cysteine mark. 4 FAS1 domains span residues 103-236, 240-371, 375-498, and 502-632; these read LSNL…DKVI, TNNI…DELL, SAKT…DRML, and MGTV…NTVL. The Cell attachment site motif lies at 642–644; the sequence is RGD.

As to quaternary structure, binds to type I, II, and IV collagens. Post-translationally, gamma-carboxylation is controversial. Gamma-carboxyglutamated; gamma-carboxyglutamate residues are formed by vitamin K dependent carboxylation; this may be required for calcium binding. According to a more recent report, does not contain vitamin K-dependent gamma-carboxyglutamate residues. In terms of processing, the EMI domain contains 2 expected intradomain disulfide bridges (Cys-49-Cys85 and Cys-84-Cys-97) and one unusual interdomain disulfide bridge to the second FAS1 domain (Cys-74-Cys-339). This arrangement violates the predicted disulfide bridge pattern of an EMI domain. As to expression, expressed in heart, kidney, liver, skeletal muscle, testis, thyroid and uterus.

Its subcellular location is the secreted. It localises to the extracellular space. The protein localises to the extracellular matrix. Plays a role in cell adhesion. May play a role in cell-collagen interactions. This is Transforming growth factor-beta-induced protein ig-h3 (Tgfbi) from Mus musculus (Mouse).